A 131-amino-acid chain; its full sequence is Glycine cleavage system H protein (131 aa).

The region spanning 24–106 is the Lipoyl-binding domain; the sequence is TVRVGITDYA…YGEGWLVELQ (83 aa). Position 65 is an N6-lipoyllysine (Lys-65).

This sequence belongs to the GcvH family. As to quaternary structure, the glycine cleavage system is composed of four proteins: P, T, L and H. The cofactor is (R)-lipoate.

The glycine cleavage system catalyzes the degradation of glycine. The H protein shuttles the methylamine group of glycine from the P protein to the T protein. The polypeptide is Glycine cleavage system H protein (Mycolicibacterium vanbaalenii (strain DSM 7251 / JCM 13017 / BCRC 16820 / KCTC 9966 / NRRL B-24157 / PYR-1) (Mycobacterium vanbaalenii)).